A 298-amino-acid chain; its full sequence is ATP synthase F(1) complex subunit gamma, mitochondrial (298 aa).

The transit peptide at Met-1–Met-25 directs the protein to the mitochondrion. At Lys-39 the chain carries N6-acetyllysine. The residue at position 49 (Lys-49) is an N6-succinyllysine. The residue at position 55 (Lys-55) is an N6-acetyllysine. Lys-115 carries the post-translational modification N6-acetyllysine; alternate. At Lys-115 the chain carries N6-succinyllysine; alternate. Lys-138 carries the post-translational modification N6-acetyllysine. Ser-146 is subject to Phosphoserine. Residue Lys-154 is modified to N6-acetyllysine; alternate. Lys-154 is modified (N6-succinyllysine; alternate). At Lys-197 the chain carries N6-acetyllysine. Lys-270 carries the N6-succinyllysine modification.

This sequence belongs to the ATPase gamma chain family. In terms of assembly, component of the ATP synthase complex composed at least of ATP5F1A/subunit alpha, ATP5F1B/subunit beta, ATP5MC1/subunit c (homooctomer), MT-ATP6/subunit a, MT-ATP8/subunit 8, ATP5ME/subunit e, ATP5MF/subunit f, ATP5MG/subunit g, ATP5MK/subunit k, ATP5MJ/subunit j, ATP5F1C/subunit gamma, ATP5F1D/subunit delta, ATP5F1E/subunit epsilon, ATP5PF/subunit F6, ATP5PB/subunit b, ATP5PD/subunit d, ATP5PO/subunit OSCP. ATP synthase complex consists of a soluble F(1) head domain (subunits alpha(3) and beta(3)) - the catalytic core - and a membrane F(0) domain - the membrane proton channel (subunits c, a, 8, e, f, g, k and j). These two domains are linked by a central stalk (subunits gamma, delta, and epsilon) rotating inside the F1 region and a stationary peripheral stalk (subunits F6, b, d, and OSCP). Interacts with FLVCR2; this interaction occurs in the absence of heme and is disrupted upon heme binding.

It is found in the mitochondrion inner membrane. Its function is as follows. Subunit gamma, of the mitochondrial membrane ATP synthase complex (F(1)F(0) ATP synthase or Complex V) that produces ATP from ADP in the presence of a proton gradient across the membrane which is generated by electron transport complexes of the respiratory chain. ATP synthase complex consist of a soluble F(1) head domain - the catalytic core - and a membrane F(1) domain - the membrane proton channel. These two domains are linked by a central stalk rotating inside the F(1) region and a stationary peripheral stalk. During catalysis, ATP synthesis in the catalytic domain of F(1) is coupled via a rotary mechanism of the central stalk subunits to proton translocation. In vivo, can only synthesize ATP although its ATP hydrolase activity can be activated artificially in vitro. With the central stalk subunit delta, is essential for the biogenesis of F(1) catalytic part of the ATP synthase complex namely in the formation of F1 assembly intermediate. This is ATP synthase F(1) complex subunit gamma, mitochondrial from Mus musculus (Mouse).